Here is a 218-residue protein sequence, read N- to C-terminus: 3-phospho-D-glycerate guanylyltransferase (218 aa).

This sequence belongs to the CofC family.

The catalysed reaction is (2R)-3-phosphoglycerate + GTP + H(+) = 3-[(R)-glyceryl]-diphospho-5'-guanosine + diphosphate. The protein operates within cofactor biosynthesis; coenzyme F420 biosynthesis. In terms of biological role, guanylyltransferase that catalyzes the activation of (2R)-3-phosphoglycerate (3PG) as 3-[(R)-glyceryl]-diphospho-5'-guanosine, via the condensation of 3PG with GTP. It is involved in the biosynthesis of a derivative of the hydride carrier cofactor coenzyme F420, 3PG-F420. This chain is 3-phospho-D-glycerate guanylyltransferase, found in Phenylobacterium zucineum (strain HLK1).